A 435-amino-acid polypeptide reads, in one-letter code: Trigger factor (435 aa).

The region spanning 161–246 (GDKLTLDFTG…IHKTEGPILP (86 aa)) is the PPIase FKBP-type domain.

This sequence belongs to the FKBP-type PPIase family. Tig subfamily.

Its subcellular location is the cytoplasm. It catalyses the reaction [protein]-peptidylproline (omega=180) = [protein]-peptidylproline (omega=0). In terms of biological role, involved in protein export. Acts as a chaperone by maintaining the newly synthesized protein in an open conformation. Functions as a peptidyl-prolyl cis-trans isomerase. The chain is Trigger factor from Colwellia psychrerythraea (strain 34H / ATCC BAA-681) (Vibrio psychroerythus).